A 781-amino-acid chain; its full sequence is Molybdenum cofactor sulfurase (781 aa).

Lys246 is subject to N6-(pyridoxal phosphate)lysine. Cys413 is an active-site residue. The region spanning 635–781 (LRLLRQSGQR…MTCGDVVLVE (147 aa)) is the MOSC domain. Ser734 bears the Phosphoserine mark.

This sequence belongs to the class-V pyridoxal-phosphate-dependent aminotransferase family. MOCOS subfamily. Requires pyridoxal 5'-phosphate as cofactor.

It carries out the reaction Mo-molybdopterin + L-cysteine + AH2 = thio-Mo-molybdopterin + L-alanine + A + H2O. It participates in cofactor biosynthesis; molybdopterin biosynthesis. Sulfurates the molybdenum cofactor. Sulfation of molybdenum is essential for xanthine dehydrogenase (XDH) and aldehyde oxidase (ADO) enzymes in which molybdenum cofactor is liganded by 1 oxygen and 1 sulfur atom in active form. This Drosophila melanogaster (Fruit fly) protein is Molybdenum cofactor sulfurase.